The following is a 1310-amino-acid chain: Multidrug resistance protein 4 (1310 aa).

A run of 5 helical transmembrane segments spans residues Trp48–Thr68, Met125–Val145, Lys196–Ala216, Leu223–Ala243, and Gly299–Leu319. The region spanning Ala55–Thr368 is the ABC transmembrane type-1 1 domain. Asn336 carries an N-linked (GlcNAc...) asparagine glycan. The chain crosses the membrane as a helical span at residues Val342–Pro362. Asn402 is a glycosylation site (N-linked (GlcNAc...) asparagine). Residues Ile403–Arg642 form the ABC transporter 1 domain. An ATP-binding site is contributed by Gly438 to Ser445. The N-linked (GlcNAc...) asparagine glycan is linked to Asn608. Transmembrane regions (helical) follow at residues Trp721–Phe741 and Ile773–Phe793. Residues Phe722–Lys1030 enclose the ABC transmembrane type-1 2 domain. N-linked (GlcNAc...) asparagine glycosylation occurs at Asn816. Transmembrane regions (helical) follow at residues Val849–Tyr869, Trp871–Asn891, and Ile945–Thr965. The ABC transporter 2 domain maps to Ile1065–Gln1304. Residue Gly1100–Ser1107 participates in ATP binding.

The protein belongs to the ABC transporter superfamily. ABCB family. Multidrug resistance exporter (TC 3.A.1.201) subfamily.

The protein resides in the membrane. It catalyses the reaction ATP + H2O + xenobioticSide 1 = ADP + phosphate + xenobioticSide 2.. In terms of biological role, energy-dependent efflux pump responsible for decreased drug accumulation in multidrug resistance parasites. The chain is Multidrug resistance protein 4 from Entamoeba histolytica (strain ATCC 30459 / HM-1:IMSS / ABRM).